The chain runs to 270 residues: Putative envelope-preserving system protein Rv2743c (270 aa).

Helical transmembrane passes span 50 to 72 (ALRW…ALLA) and 77 to 99 (FTSL…TLLL).

In terms of assembly, interacts with PspA and Rv2742c.

It is found in the membrane. Functionally, involved in preservation of envelope integrity and tolerance to surface stress. Reverses the inhibitory effect of PspA on ClgR activity. Facilitates intracellular growth of M.tuberculosis. This Mycobacterium tuberculosis (strain ATCC 25618 / H37Rv) protein is Putative envelope-preserving system protein Rv2743c.